Here is a 181-residue protein sequence, read N- to C-terminus: ATP-dependent protease subunit HslV (181 aa).

T8 is an active-site residue. Na(+) contacts are provided by G165, C168, and T171.

This sequence belongs to the peptidase T1B family. HslV subfamily. As to quaternary structure, a double ring-shaped homohexamer of HslV is capped on each side by a ring-shaped HslU homohexamer. The assembly of the HslU/HslV complex is dependent on binding of ATP.

It is found in the cytoplasm. The catalysed reaction is ATP-dependent cleavage of peptide bonds with broad specificity.. Allosterically activated by HslU binding. Its function is as follows. Protease subunit of a proteasome-like degradation complex believed to be a general protein degrading machinery. In Oceanobacillus iheyensis (strain DSM 14371 / CIP 107618 / JCM 11309 / KCTC 3954 / HTE831), this protein is ATP-dependent protease subunit HslV.